Here is a 207-residue protein sequence, read N- to C-terminus: Ribosomal RNA small subunit methyltransferase G (207 aa).

Residues glycine 73, leucine 78, 124 to 125, and arginine 139 contribute to the S-adenosyl-L-methionine site; that span reads VE.

The protein belongs to the methyltransferase superfamily. RNA methyltransferase RsmG family.

Its subcellular location is the cytoplasm. The catalysed reaction is guanosine(527) in 16S rRNA + S-adenosyl-L-methionine = N(7)-methylguanosine(527) in 16S rRNA + S-adenosyl-L-homocysteine. Functionally, specifically methylates the N7 position of guanine in position 527 of 16S rRNA. This Cronobacter sakazakii (strain ATCC BAA-894) (Enterobacter sakazakii) protein is Ribosomal RNA small subunit methyltransferase G.